A 469-amino-acid chain; its full sequence is Probable acetate kinase (469 aa).

Asn30 contributes to the Mg(2+) binding site. Lys37 serves as a coordination point for ATP. Residue Arg122 participates in substrate binding. Asp179 (proton donor/acceptor) is an active-site residue. 239-243 (HLGSG) contacts ATP. Glu453 contributes to the Mg(2+) binding site.

It belongs to the acetokinase family. Mg(2+) serves as cofactor.

The enzyme catalyses acetate + ATP = acetyl phosphate + ADP. The protein operates within metabolic intermediate biosynthesis; acetyl-CoA biosynthesis; acetyl-CoA from acetate: step 1/2. The protein is Probable acetate kinase of Neurospora crassa (strain ATCC 24698 / 74-OR23-1A / CBS 708.71 / DSM 1257 / FGSC 987).